Here is a 275-residue protein sequence, read N- to C-terminus: Formamidopyrimidine-DNA glycosylase (275 aa).

P2 serves as the catalytic Schiff-base intermediate with DNA. The Proton donor role is filled by E3. K58 serves as the catalytic Proton donor; for beta-elimination activity. DNA is bound by residues H93, R111, and R156. Residues 241 to 275 (FVYDRAGEPCRVCGTPIRQIVQGQRSTYFCPTCQR) form an FPG-type zinc finger. R265 (proton donor; for delta-elimination activity) is an active-site residue.

The protein belongs to the FPG family. As to quaternary structure, monomer. Requires Zn(2+) as cofactor.

It catalyses the reaction Hydrolysis of DNA containing ring-opened 7-methylguanine residues, releasing 2,6-diamino-4-hydroxy-5-(N-methyl)formamidopyrimidine.. The enzyme catalyses 2'-deoxyribonucleotide-(2'-deoxyribose 5'-phosphate)-2'-deoxyribonucleotide-DNA = a 3'-end 2'-deoxyribonucleotide-(2,3-dehydro-2,3-deoxyribose 5'-phosphate)-DNA + a 5'-end 5'-phospho-2'-deoxyribonucleoside-DNA + H(+). Functionally, involved in base excision repair of DNA damaged by oxidation or by mutagenic agents. Acts as a DNA glycosylase that recognizes and removes damaged bases. Has a preference for oxidized purines, such as 7,8-dihydro-8-oxoguanine (8-oxoG). Has AP (apurinic/apyrimidinic) lyase activity and introduces nicks in the DNA strand. Cleaves the DNA backbone by beta-delta elimination to generate a single-strand break at the site of the removed base with both 3'- and 5'-phosphates. This Burkholderia multivorans (strain ATCC 17616 / 249) protein is Formamidopyrimidine-DNA glycosylase.